A 320-amino-acid chain; its full sequence is MIKKIGVLTSGGDAPGMNAAIRGVVRAALTEGLEVFGIYDGYLGLYEDRMVQLDRYSVSDMINRGGTFLGSARFPEFREEHIRAVAIENMKKRGLDALVVIGGDGSYMGAMRLTEMGFPCIGLPGTIDNDIKGTDYTIGFFTALSTVVEAIDRLRDTSSSHQRISVVEVMGRYCGDLTLAAAIAGGCEFIMVPEVEYTRDDLVAEIKAGIAKGKKHAIVAITEHMCDVDELASYIEKETGRETRATVLGHIQRGGSPVPYDRILASRMGAYAIELLLQGHGGRCVGIQNEKLVHHDIIDAIENMKRPFKNDWLDCAKKLY.

Gly-12 provides a ligand contact to ATP. ADP is bound by residues 22-26 and 55-60; these read RGVVR and RYSVSD. Residues 73-74 and 103-106 each bind ATP; these read RF and GDGS. Residue Asp-104 coordinates Mg(2+). Residue 126–128 participates in substrate binding; it reads TID. Asp-128 acts as the Proton acceptor in catalysis. Arg-155 is a binding site for ADP. Substrate is bound by residues Arg-163 and 170 to 172; that span reads MGR. ADP is bound by residues 186–188, Lys-212, and 214–216; these read GCE and KKH. Substrate is bound by residues Glu-223, Arg-244, and 250–253; that span reads HIQR.

Belongs to the phosphofructokinase type A (PFKA) family. ATP-dependent PFK group I subfamily. Prokaryotic clade 'B1' sub-subfamily. As to quaternary structure, homotetramer. It depends on Mg(2+) as a cofactor.

The protein localises to the cytoplasm. It carries out the reaction beta-D-fructose 6-phosphate + ATP = beta-D-fructose 1,6-bisphosphate + ADP + H(+). The protein operates within carbohydrate degradation; glycolysis; D-glyceraldehyde 3-phosphate and glycerone phosphate from D-glucose: step 3/4. Its activity is regulated as follows. Allosterically activated by ADP and other diphosphonucleosides, and allosterically inhibited by phosphoenolpyruvate. Catalyzes the phosphorylation of D-fructose 6-phosphate to fructose 1,6-bisphosphate by ATP, the first committing step of glycolysis. The chain is ATP-dependent 6-phosphofructokinase from Klebsiella pneumoniae (strain 342).